A 226-amino-acid chain; its full sequence is Choline transport system permease protein OpuBD (226 aa).

The ABC transmembrane type-1 domain maps to 22–202 (FGRHFLMSAY…VMAVGADLLM (181 aa)). Transmembrane regions (helical) follow at residues 27–47 (LMSA…GILI), 52–72 (RLSA…ALAM), 73–93 (LAVL…SLFL), 148–168 (ALVI…GGLG), and 182–202 (AIIL…DLLM).

Belongs to the binding-protein-dependent transport system permease family. CysTW subfamily.

The protein localises to the cell membrane. In terms of biological role, involved in a high affinity multicomponent binding-protein-dependent transport system for choline; probably responsible for the translocation of the substrate across the membrane. In Bacillus subtilis (strain 168), this protein is Choline transport system permease protein OpuBD (opuBD).